A 187-amino-acid chain; its full sequence is MRLVLLGPPGSGKGTQATRLKDTFDIPHISTGDLLRAEVAAGSPLGLKAKEVMARGDLVSDDILLGMLEARLGQADVAKGFILDGYPRNVAQANALDELLGKIGQPLDAVVQLDVASELLVERIAGRAKAEGREDDNPESVRKRLQVYTDSTAPVIGFYEQRGKLARVDGVGSLDEVLERISKALGR.

10–15 (GSGKGT) is an ATP binding site. Residues 30-59 (STGDLLRAEVAAGSPLGLKAKEVMARGDLV) form an NMP region. AMP contacts are provided by residues threonine 31, arginine 36, 57 to 59 (DLV), 85 to 88 (GYPR), and glutamine 92. Positions 126 to 136 (GRAKAEGREDD) are LID. Arginine 127 provides a ligand contact to ATP. Arginine 133 and arginine 144 together coordinate AMP. Residue glycine 172 coordinates ATP.

It belongs to the adenylate kinase family. Monomer.

The protein localises to the cytoplasm. It carries out the reaction AMP + ATP = 2 ADP. The protein operates within purine metabolism; AMP biosynthesis via salvage pathway; AMP from ADP: step 1/1. Functionally, catalyzes the reversible transfer of the terminal phosphate group between ATP and AMP. Plays an important role in cellular energy homeostasis and in adenine nucleotide metabolism. The protein is Adenylate kinase of Xanthomonas axonopodis pv. citri (strain 306).